Consider the following 378-residue polypeptide: GDP-mannose-dependent alpha-mannosyltransferase (378 aa).

Belongs to the glycosyltransferase group 1 family. Glycosyltransferase 4 subfamily.

Its pathway is phospholipid metabolism; phosphatidylinositol metabolism. Its function is as follows. Catalyzes the addition of a mannose residue from GDP-D-mannose to GlcAGroAc2 to generate 1,2-di-O-C16/C18:1-(alpha-D-mannopyranosyl)-(1-4)-(alpha-D-glucopyranosyluronic acid)-(1-3)-glycerol(ManGlcAGroAc2). The chain is GDP-mannose-dependent alpha-mannosyltransferase (mgtA) from Mycobacterium tuberculosis (strain CDC 1551 / Oshkosh).